A 211-amino-acid polypeptide reads, in one-letter code: Ribonuclease HII (211 aa).

One can recognise an RNase H type-2 domain in the interval 21 to 211 (SSIAGLDEAG…APLKSMFDVI (191 aa)). A divalent metal cation is bound by residues D27, E28, and D122.

This sequence belongs to the RNase HII family. Requires Mn(2+) as cofactor. Mg(2+) serves as cofactor.

It localises to the cytoplasm. The catalysed reaction is Endonucleolytic cleavage to 5'-phosphomonoester.. Functionally, endonuclease that specifically degrades the RNA of RNA-DNA hybrids. The chain is Ribonuclease HII from Dehalococcoides mccartyi (strain ATCC BAA-2266 / KCTC 15142 / 195) (Dehalococcoides ethenogenes (strain 195)).